A 43-amino-acid polypeptide reads, in one-letter code: Protein PsbN (43 aa).

A helical membrane pass occupies residues 5–27; that stretch reads TLVTISISCLLVSFTGYAIYTSF.

The protein belongs to the PsbN family.

The protein localises to the plastid. It localises to the chloroplast thylakoid membrane. Its function is as follows. May play a role in photosystem I and II biogenesis. In Welwitschia mirabilis (Tree tumbo), this protein is Protein PsbN.